A 398-amino-acid chain; its full sequence is Trans-2-enoyl-CoA reductase [NADH] (398 aa).

NAD(+) contacts are provided by residues 47-52, 74-75, 111-112, and 139-140; these read GASSGF, YE, DA, and LA. Residue Tyr225 coordinates substrate. Tyr235 functions as the Proton donor in the catalytic mechanism. Residues Lys244 and 274–276 contribute to the NAD(+) site; that span reads LVT.

Belongs to the TER reductase family. Monomer.

It catalyses the reaction a 2,3-saturated acyl-CoA + NAD(+) = a (2E)-enoyl-CoA + NADH + H(+). Its pathway is lipid metabolism; fatty acid biosynthesis. Its function is as follows. Involved in the fatty acid synthesis (FAS II). Catalyzes the reduction of the carbon-carbon double bond of crotonyl-CoA to yield butyryl-CoA. This is Trans-2-enoyl-CoA reductase [NADH] from Clostridium acetobutylicum (strain ATCC 824 / DSM 792 / JCM 1419 / IAM 19013 / LMG 5710 / NBRC 13948 / NRRL B-527 / VKM B-1787 / 2291 / W).